Consider the following 471-residue polypeptide: Putative multidrug resistance protein MdtD (471 aa).

Residues methionine 1–glutamine 11 are Periplasmic-facing. The chain crosses the membrane as a helical span at residues leucine 12–alanine 32. Topologically, residues leucine 33–histidine 48 are cytoplasmic. Residues methionine 49 to alanine 69 traverse the membrane as a helical segment. The Periplasmic segment spans residues aspartate 70–asparagine 76. Residues isoleucine 77–threonine 97 traverse the membrane as a helical segment. The Cytoplasmic segment spans residues leucine 98 to leucine 101. The helical transmembrane segment at leucine 102 to methionine 124 threads the bilayer. The Periplasmic portion of the chain corresponds to lysine 125 to threonine 137. A helical transmembrane segment spans residues phenylalanine 138 to valine 158. At glutamate 159–histidine 164 the chain is on the cytoplasmic side. A helical membrane pass occupies residues tryptophan 165–methionine 185. At proline 186–aspartate 196 the chain is on the periplasmic side. Residues leucine 197–serine 217 form a helical membrane-spanning segment. Over lysine 218–proline 224 the chain is Cytoplasmic. A helical membrane pass occupies residues leucine 225–alanine 245. The Periplasmic portion of the chain corresponds to arginine 246–threonine 262. The helical transmembrane segment at phenylalanine 263 to methionine 283 threads the bilayer. Over threonine 284–proline 285 the chain is Cytoplasmic. A helical transmembrane segment spans residues valine 286 to methionine 306. Residues valine 307–threonine 341 are Periplasmic-facing. A helical membrane pass occupies residues methionine 342–leucine 362. At glutamine 363–serine 395 the chain is on the cytoplasmic side. The chain crosses the membrane as a helical span at residues methionine 396 to phenylalanine 416. At glycine 417–threonine 430 the chain is on the periplasmic side. Residues valine 431–alanine 451 form a helical membrane-spanning segment. Topologically, residues arginine 452–glutamine 471 are cytoplasmic.

This sequence belongs to the major facilitator superfamily. TCR/Tet family.

The protein localises to the cell inner membrane. The polypeptide is Putative multidrug resistance protein MdtD (Escherichia coli O7:K1 (strain IAI39 / ExPEC)).